The sequence spans 165 residues: Large ribosomal subunit protein uL10 (165 aa).

This sequence belongs to the universal ribosomal protein uL10 family. In terms of assembly, part of the ribosomal stalk of the 50S ribosomal subunit. The N-terminus interacts with L11 and the large rRNA to form the base of the stalk. The C-terminus forms an elongated spine to which L12 dimers bind in a sequential fashion forming a multimeric L10(L12)X complex.

Its function is as follows. Forms part of the ribosomal stalk, playing a central role in the interaction of the ribosome with GTP-bound translation factors. This is Large ribosomal subunit protein uL10 from Salmonella agona (strain SL483).